The following is a 122-amino-acid chain: Large ribosomal subunit protein uL18 (122 aa).

The protein belongs to the universal ribosomal protein uL18 family. In terms of assembly, part of the 50S ribosomal subunit; part of the 5S rRNA/L5/L18/L25 subcomplex. Contacts the 5S and 23S rRNAs.

Its function is as follows. This is one of the proteins that bind and probably mediate the attachment of the 5S RNA into the large ribosomal subunit, where it forms part of the central protuberance. The sequence is that of Large ribosomal subunit protein uL18 from Geobacter sp. (strain M21).